Reading from the N-terminus, the 376-residue chain is Thiol-disulfide oxidoreductase LTO1 (376 aa).

Residues 1–45 constitute a chloroplast transit peptide; sequence MMARFVSVSSCQFHFGFREVSPPSVTSYPRRFEVSDRRFPAIPIK. The disordered stretch occupies residues 44-77; it reads IKCSSSEPENGEDSAPSLSSSSSSSTSEVSTSNS. Residues 46 to 81 lie on the Stromal side of the membrane; sequence CSSSEPENGEDSAPSLSSSSSSSTSEVSTSNSSTYN. Positions 57–77 are enriched in low complexity; that stretch reads SAPSLSSSSSSSTSEVSTSNS. A helical membrane pass occupies residues 82–102; sequence WYTGIGGIGMLDTAYLTYLKV. The Lumenal portion of the chain corresponds to 103 to 125; the sequence is TGSDAFCPIGGGTCGDVLNSDYA. Cysteine 109 and cysteine 116 are oxidised to a cystine. The helical transmembrane segment at 126–146 threads the bilayer; sequence VVFGVPLPVIGFVMYGVVTAL. Residues 147–165 are Stromal-facing; sequence SAELGEGNLPFGISKSNGR. Residues 166-186 form a helical membrane-spanning segment; sequence FALFGITTAMASASAYFLYIL. Over 187–192 the chain is Lumenal; that stretch reads STKLSG. The chain crosses the membrane as a helical span at residues 193–213; the sequence is SSCLYCLVSAFLSFSLFFLSV. A disulfide bond links cysteine 195 and cysteine 198. Topologically, residues 214-223 are stromal; sequence KDVKLQEIQQ. The chain crosses the membrane as a helical span at residues 224-244; it reads VVGLQICLAIIVVASLTASYS. Over 245–376 the chain is Lumenal; sequence TAQPIPSRSG…DQANETNQLQ (132 aa). Cystine bridges form between cysteine 293/cysteine 296 and cysteine 316/cysteine 331.

Belongs to the VKOR family. In terms of assembly, interacts with the PSII subunits PSBO1 and PSBO2. Interacts with TL17, TL20.3, HCF164, PETJ, VDE1, EDA3, FKBP13 and FKBP20-2. In terms of tissue distribution, expressed in cotyledons, rosette leaves, stems, cauline leaves and flowers.

Its subcellular location is the plastid. It localises to the chloroplast thylakoid membrane. Its function is as follows. Thiol-disulfide oxidoreductase catalyzing disulfide bond formation of chloroplast proteins and involved in redox regulation and photosynthetic electron transport. Required for the assembly of photosystem II (PSII) through the formation of disulfide bond in PSBO, a subunit of the PSII oxygen-evolving complex in the thylakoid lumen. Involved in the formation of disulfide bonds in the lumenal protein FKBP13. In vitro, reduces phylloquinone (vitamin K1) and menaquinone (vitamin K2) to their respective quinol. Cannot reduce phylloquinone epoxide to phylloquinone. Plays an important role in regulating the thylakoid lumen redox. The protein is Thiol-disulfide oxidoreductase LTO1 of Arabidopsis thaliana (Mouse-ear cress).